A 145-amino-acid chain; its full sequence is Maximins 3/H11 type 3 (145 aa).

The signal sequence occupies residues 1-18 (MNFKYIVAVSFLIASAYA). Propeptides lie at residues 19-43 (RSVQ…LREI) and 75-122 (TAEE…TKKE). I144 is subject to Isoleucine amide.

This sequence belongs to the bombinin family. In terms of tissue distribution, expressed by the skin glands.

It is found in the secreted. In terms of biological role, maximin-3 shows antibacterial activity against both Gram-positive and Gram-negative bacteria. It also shows antimicrobial activity against the fungus C.albicans, but not against A.flavus nor P.uticale. It has little hemolytic activity. It possess a significant cytotoxicity against tumor cell lines. It possess a significant anti-HIV activity. It shows high spermicidal activity. Its function is as follows. Maximin-H11 shows antimicrobial activity against bacteria and against the fungus C.albicans. Shows strong hemolytic activity. This is Maximins 3/H11 type 3 from Bombina maxima (Giant fire-bellied toad).